We begin with the raw amino-acid sequence, 317 residues long: L-lactate dehydrogenase (317 aa).

NAD(+)-binding positions include Val17, Asp38, Lys43, Tyr69, and 83–84; that span reads GA. Substrate-binding residues include Gln86 and Arg92. Residues Ser105, 122-124, and Ser147 contribute to the NAD(+) site; that span reads ATN. Substrate is bound at residue 124 to 127; the sequence is NPVD. 152-155 provides a ligand contact to substrate; that stretch reads DTAR. The beta-D-fructose 1,6-bisphosphate site is built by Arg157 and His172. Catalysis depends on His179, which acts as the Proton acceptor. Residue Tyr224 is modified to Phosphotyrosine. Substrate is bound at residue Thr233.

It belongs to the LDH/MDH superfamily. LDH family. In terms of assembly, homotetramer.

It localises to the cytoplasm. It carries out the reaction (S)-lactate + NAD(+) = pyruvate + NADH + H(+). The protein operates within fermentation; pyruvate fermentation to lactate; (S)-lactate from pyruvate: step 1/1. Its activity is regulated as follows. Allosterically activated by fructose 1,6-bisphosphate (FBP). Catalyzes the conversion of lactate to pyruvate. The protein is L-lactate dehydrogenase of Geobacillus thermodenitrificans (strain NG80-2).